The primary structure comprises 255 residues: Myb-related protein Zm38 (255 aa).

2 HTH myb-type domains span residues 9–61 (KAHT…INYL) and 62–116 (RPDL…RRKL). DNA-binding regions (H-T-H motif) lie at residues 37–61 (WRSLPKAAGLLRCGKSCRLRWINYL) and 89–112 (WSLIAARLPGRTDNEIKNYWNTHV).

Its subcellular location is the nucleus. In terms of biological role, transcription factor that negatively regulates genes involved in anthocyanin biosynthesis. In Zea mays (Maize), this protein is Myb-related protein Zm38.